The primary structure comprises 242 residues: Anthranilate phosphoribosyltransferase (242 aa).

5-phospho-alpha-D-ribose 1-diphosphate contacts are provided by residues G79, 82–83 (GD), T87, 89–92 (NVST), 107–115 (KHGNRAVSS), and S119. G79 contributes to the anthranilate binding site. Residue S91 participates in Mg(2+) binding. N110 contacts anthranilate. Anthranilate is bound at residue R165. The Mg(2+) site is built by D224 and E225.

The protein belongs to the anthranilate phosphoribosyltransferase family. In terms of assembly, homodimer. Requires Mg(2+) as cofactor.

The catalysed reaction is N-(5-phospho-beta-D-ribosyl)anthranilate + diphosphate = 5-phospho-alpha-D-ribose 1-diphosphate + anthranilate. It functions in the pathway amino-acid biosynthesis; L-tryptophan biosynthesis; L-tryptophan from chorismate: step 2/5. In terms of biological role, catalyzes the transfer of the phosphoribosyl group of 5-phosphorylribose-1-pyrophosphate (PRPP) to anthranilate to yield N-(5'-phosphoribosyl)-anthranilate (PRA). This Bacillus caldotenax protein is Anthranilate phosphoribosyltransferase (trpD).